Here is a 190-residue protein sequence, read N- to C-terminus: CASP-like protein 1E1 (190 aa).

The tract at residues 1 to 21 (MEHESKTKMDGIEMEKGKKEN) is disordered. Topologically, residues 1-28 (MEHESKTKMDGIEMEKGKKENGSRKGVE) are cytoplasmic. Residues 29 to 49 (ITMRVLALVLTMVAATVLGVA) form a helical membrane-spanning segment. Residues 50–83 (KQTEVVPIKLIPTLPPLNVATTAKASYLSAFVYN) are Extracellular-facing. Residues 84–104 (ICANAIACGYTAISIMIVIIS) traverse the membrane as a helical segment. Topologically, residues 105–111 (KGRRSKC) are cytoplasmic. Residues 112-132 (LLMAVLIGDLMMVALLCSSTG) form a helical membrane-spanning segment. The Extracellular segment spans residues 133-163 (AAGAIGLMGRHGNKHVMWKKVCGVFGKFCNQ). A helical membrane pass occupies residues 164-184 (AAVSVAITLIASVVFMLLVVL). Over 185–190 (DALKLP) the chain is Cytoplasmic.

The protein belongs to the Casparian strip membrane proteins (CASP) family. As to quaternary structure, homodimer and heterodimers.

Its subcellular location is the cell membrane. The sequence is that of CASP-like protein 1E1 from Arabidopsis lyrata subsp. lyrata (Lyre-leaved rock-cress).